The chain runs to 1302 residues: 1-phosphatidylinositol 4,5-bisphosphate phosphodiesterase gamma-1 (1302 aa).

Alanine 2 carries the post-translational modification N-acetylalanine. The PH 1 domain occupies 27–142; sequence RSLEVGTVMT…WIKGLTWLME (116 aa). In terms of domain architecture, EF-hand spans 152–187; sequence QIERWLRKQFYSVDRNREDRISAKDLKNMLSQVNYR. Aspartate 165, asparagine 167, glutamate 169, arginine 171, and aspartate 176 together coordinate Ca(2+). A PI-PLC X-box domain is found at 320–464; that stretch reads DTMNNPLSHY…LRRKILIKHK (145 aa). Active-site residues include histidine 335 and histidine 380. Residues 489–523 enclose the PH 2; first part domain; the sequence is SIKNGILYLEDPVNHEWYPHYFVLTSSKIYYSEET. At tyrosine 506 the chain carries Phosphotyrosine. The tract at residues 522-545 is disordered; sequence ETSSDQGNEDEEEPKEASSSTELH. SH2 domains lie at 550 to 657 and 668 to 756; these read WFHG…SEPV and WYHA…RYPI. Tyrosine 771 carries the phosphotyrosine; by SYK modification. Tyrosine 775 carries the post-translational modification Phosphotyrosine. The residue at position 783 (tyrosine 783) is a Phosphotyrosine; by ITK, SYK and TXK. In terms of domain architecture, SH3 spans 791-851; the sequence is TFKCAVKALF…PSNYVEEMIN (61 aa). The PH 2; second part domain maps to 895–931; it reads FVFSISMPSVAQWSLDVAADSQEELQDWVKKIREVAQ. Positions 953–1070 constitute a PI-PLC Y-box domain; it reads LSELVVYCRP…GYVLQPSTMR (118 aa). Tyrosine 977 is modified (phosphotyrosine). One can recognise a C2 domain in the interval 1071-1194; the sequence is DEAFDPFDKS…TGYRAVPLKN (124 aa). Phosphoserine occurs at positions 1221, 1227, 1233, and 1248. A Phosphotyrosine modification is found at tyrosine 1253. At serine 1263 the chain carries Phosphoserine.

In terms of assembly, interacts (via SH2 domain) with FGFR1, FGFR2, FGFR3 and FGFR4 (phosphorylated). Interacts with RALGPS1. Interacts (via SH2 domains) with VIL1 (phosphorylated at C-terminus tyrosine phosphorylation sites). Interacts (via SH2 domain) with RET. Interacts with AGAP2 via its SH3 domain. Interacts with LAT (phosphorylated) upon TCR activation. Interacts (via SH3 domain) with the Pro-rich domain of TNK1. Associates with BLNK, VAV1, GRB2 and NCK1 in a B-cell antigen receptor-dependent fashion. Interacts with CBLB in activated T-cells; which inhibits phosphorylation. Interacts with SHB. Interacts (via SH3 domain) with the Arg/Gly-rich-flanked Pro-rich domains of KHDRBS1/SAM68. This interaction is selectively regulated by arginine methylation of KHDRBS1/SAM68. Interacts with INPP5D/SHIP1, THEMIS and CLNK. Interacts with FLT4 and KIT. Interacts with AXL. Interacts with SYK; activates PLCG1. Interacts with FLT1 (tyrosine-phosphorylated). Interacts (via SH2 domain) with PDGFRA and PDGFRB (tyrosine phosphorylated). Interacts with PIP5K1C. Interacts with NTRK1 and NTRK2 (phosphorylated upon ligand-binding). Interacts with TESPA1. Interacts with GRB2, LAT and THEMIS upon TCR activation in thymocytes; the association is weaker in the absence of TESPA1. Interacts (via C-terminal proline-rich domain (PRD)) with PLCG1 (via SH3 domain); this interaction leads to guanine nucleotide exchange from PlCG1 to DNM1 and enhances DNM1-dependent endocytosis. The cofactor is Ca(2+). In terms of processing, tyrosine phosphorylated in response to signaling via activated FLT3, KIT and PDGFRA. Tyrosine phosphorylated by activated FGFR1, FGFR2, FGFR3 and FGFR4. Tyrosine phosphorylated by activated FLT1 and KDR. Tyrosine phosphorylated by activated PDGFRB. The receptor-mediated activation of PLCG1 involves its phosphorylation by tyrosine kinases in response to ligation of a variety of growth factor receptors and immune system receptors. For instance, SYK phosphorylates and activates PLCG1 in response to ligation of the B-cell receptor. Phosphorylated by ITK and TXK on Tyr-783 upon TCR activation in T-cells. May be dephosphorylated by PTPRJ. Post-translationally, ubiquitinated by CBLB in activated T-cells.

It is found in the cell projection. Its subcellular location is the lamellipodium. It localises to the ruffle. It carries out the reaction a 1,2-diacyl-sn-glycero-3-phospho-(1D-myo-inositol-4,5-bisphosphate) + H2O = 1D-myo-inositol 1,4,5-trisphosphate + a 1,2-diacyl-sn-glycerol + H(+). The catalysed reaction is a 1,2-diacyl-sn-glycero-3-phospho-(1D-myo-inositol) + H2O = 1D-myo-inositol 1-phosphate + a 1,2-diacyl-sn-glycerol + H(+). Activated by phosphorylation on tyrosine residues. Mediates the production of the second messenger molecules diacylglycerol (DAG) and inositol 1,4,5-trisphosphate (IP3). Plays an important role in the regulation of intracellular signaling cascades. Becomes activated in response to ligand-mediated activation of receptor-type tyrosine kinases, such as PDGFRA, PDGFRB, EGFR, FGFR1, FGFR2, FGFR3 and FGFR4. Plays a role in actin reorganization and cell migration. Guanine nucleotide exchange factor that binds the GTPase DNM1 and catalyzes the dissociation of GDP, allowing a GTP molecule to bind in its place, therefore enhancing DNM1-dependent endocytosis. The chain is 1-phosphatidylinositol 4,5-bisphosphate phosphodiesterase gamma-1 from Mus musculus (Mouse).